The primary structure comprises 385 residues: Polyketide synthase 2 (385 aa).

Cys-157 is an active-site residue.

The protein belongs to the thiolase-like superfamily. Chalcone/stilbene synthases family. Expressed in leaves and glandular trichomes.

Its subcellular location is the cytoplasm. Polyketide synthase responsible for the biosynthesis of secondary metabolites. The chain is Polyketide synthase 2 (PKSG2) from Cannabis sativa (Hemp).